The following is a 653-amino-acid chain: MNAAVVRRTQEALGKVIRRPPLTEKLLNKPPFRYLHDIITEVIRITGFMKGLYTDAEMKSDNVKDKDAKISFLQKAIDVVMMVSGEPLAAKPARIVAGHEPERTNELLQLIGKCCLSKLSSDEAVKRVLAGEKGDSRGRVLRTSKAQEPDNKSVKEEESRTQKEEKRSSEVKERSSSAEHKQKEELKEDSKPREKERDKEKAKEADRDRHREPDRDRNRDGEREKARARAKQDRDRNNKDRDRETERDRDRDRRSDGGKEKERQKDRDRDKGKDRERRKSKNGEHTRDPDREKSRDADKSEKKADISVGASKSSTLKASKRRSKNSLEGRKEDNISAKILDSIVSGLNDEPDQETTAPEIDDNSASLWRENAEPEPAVKQKGDSPSDAEGEAVPTSQDKLEVTENAEVSNELPSSLRRIPRPGSARPAPPRVKRQESTETLAGDRSGSGKTVSTVIIDSQNSDNEDDEQFVVEAAPQLSEIAEIEMVPSGDLEDEEKHGGLVKKILETKKDYEKLQQSPKPGEKERSLIFESAWKKEKDIVSKEIEKLRVSIQTLCKSALPLGKIMDYIQEDVDAMQNELQLWHSENRQHAEALSKEQSITDSAVEPLKAELSELEQQIKDQQDKICAVKANILKNEEKIQKMVHSINLSSRR.

The segment at 1-306 (MNAAVVRRTQ…ADKSEKKADI (306 aa)) is abolishes microtubules binding when missing. A disordered region spans residues 134 to 467 (GDSRGRVLRT…DSQNSDNEDD (334 aa)). 3 stretches are compositionally biased toward basic and acidic residues: residues 145–305 (KAQE…KKAD), 325–335 (NSLEGRKEDNI), and 370–384 (ENAE…KGDS). Positions 229–653 (RAKQDRDRNN…VHSINLSSRR (425 aa)) are DISC1-interaction domain. S437 carries the post-translational modification Phosphoserine. The segment covering 448–462 (SGKTVSTVIIDSQNS) has biased composition (polar residues). Positions 533 to 628 (AWKKEKDIVS…IKDQQDKICA (96 aa)) form a coiled coil.

This sequence belongs to the TRAF3IP1 family. Component of the IFT complex B, at least composed of IFT20, IFT22, IFT25, IFT27, IFT46, IFT52, TRAF3IP1/IFT54, IFT57, IFT74, IFT80, IFT81, and IFT88. Interacts with IFT88. Interacts with IL13RA1. Binds to microtubules, TRAF3 and DISC1. Interacts with MAP4.

It is found in the cytoplasm. The protein resides in the cytoskeleton. It localises to the cell projection. Its subcellular location is the cilium. The protein localises to the cilium axoneme. It is found in the cilium basal body. Plays an inhibitory role on IL13 signaling by binding to IL13RA1. Involved in suppression of IL13-induced STAT6 phosphorylation, transcriptional activity and DNA-binding. Recruits TRAF3 and DISC1 to the microtubules. Involved in kidney development and epithelial morphogenesis. Involved in the regulation of microtubule cytoskeleton organization. Is a negative regulator of microtubule stability, acting through the control of MAP4 levels. Involved in ciliogenesis. The sequence is that of TRAF3-interacting protein 1 (Traf3ip1) from Rattus norvegicus (Rat).